The sequence spans 120 residues: MDKKQSRLRRGRQTRAKIAELKVIRLAVHRTNLHIYASIIGPDAKILASASTAEAEVRKELAGQSGAGGNVAAAALVGKRVAEKALKAGIAEVAFDRSGFRYHGRVKAVAEAAREAGLKF.

Belongs to the universal ribosomal protein uL18 family. Part of the 50S ribosomal subunit; part of the 5S rRNA/L5/L18/L25 subcomplex. Contacts the 5S and 23S rRNAs.

Its function is as follows. This is one of the proteins that bind and probably mediate the attachment of the 5S RNA into the large ribosomal subunit, where it forms part of the central protuberance. The chain is Large ribosomal subunit protein uL18 from Herminiimonas arsenicoxydans.